The chain runs to 79 residues: Small ribosomal subunit protein bS18 (79 aa).

This sequence belongs to the bacterial ribosomal protein bS18 family. In terms of assembly, part of the 30S ribosomal subunit. Forms a tight heterodimer with protein bS6.

Functionally, binds as a heterodimer with protein bS6 to the central domain of the 16S rRNA, where it helps stabilize the platform of the 30S subunit. In Bacillus velezensis (strain DSM 23117 / BGSC 10A6 / LMG 26770 / FZB42) (Bacillus amyloliquefaciens subsp. plantarum), this protein is Small ribosomal subunit protein bS18.